Here is a 317-residue protein sequence, read N- to C-terminus: Transaldolase (317 aa).

Residue lysine 132 is the Schiff-base intermediate with substrate of the active site.

The protein belongs to the transaldolase family. Type 1 subfamily. In terms of assembly, homodimer.

It is found in the cytoplasm. It catalyses the reaction D-sedoheptulose 7-phosphate + D-glyceraldehyde 3-phosphate = D-erythrose 4-phosphate + beta-D-fructose 6-phosphate. Its pathway is carbohydrate degradation; pentose phosphate pathway; D-glyceraldehyde 3-phosphate and beta-D-fructose 6-phosphate from D-ribose 5-phosphate and D-xylulose 5-phosphate (non-oxidative stage): step 2/3. Its function is as follows. Transaldolase is important for the balance of metabolites in the pentose-phosphate pathway. The polypeptide is Transaldolase (Haemophilus influenzae (strain PittEE)).